We begin with the raw amino-acid sequence, 479 residues long: Neuronal acetylcholine receptor subunit alpha-9 (479 aa).

The N-terminal stretch at 1–25 is a signal peptide; sequence MNRPHSCLSFCWMYFAASGIRAVET. At 26 to 237 the chain is on the extracellular side; that stretch reads ANGKYAQKLF…TFTLLLKRRS (212 aa). N-linked (GlcNAc...) asparagine glycosylation is present at asparagine 57. A disulfide bridge links cysteine 155 with cysteine 169. A glycan (N-linked (GlcNAc...) asparagine) is linked at asparagine 170. Na(+)-binding residues include serine 191 and aspartate 193. Cysteine 219 and cysteine 220 are oxidised to a cystine. A run of 3 helical transmembrane segments spans residues 238 to 262, 269 to 287, and 302 to 323; these read SFYIVNLLIPCVLISFLAPLSFYLP, VSLGVTILLAMTVFQLMVA, and YYIATMALITASTALTIMVMNI. At 324-457 the chain is on the cytoplasmic side; that stretch reads HFCGAEARPV…WKKVAKVIDR (134 aa). The helical transmembrane segment at 458–476 threads the bilayer; sequence FFMWIFFAMVFVMTVLIIA.

Belongs to the ligand-gated ion channel (TC 1.A.9) family. Acetylcholine receptor (TC 1.A.9.1) subfamily. Alpha-9/CHRNA9 sub-subfamily. As to quaternary structure, forms homo- or heterooligomeric channels in conjunction with CHRNA10. The native outer hair cell receptor may be composed of CHRNA9:CHRNA10 heterooligomers. Found in the stoichiometric form (CHRNA9)2:(CHRNA10)3. Detected in the nasal epithelium, in the outer hair cells of the cochlea, in the pars tuberalis of the hypophysis, and in the developing muscle of the tongue. Also expressed in the neurons of dorsal root ganglia.

It is found in the synaptic cell membrane. The protein localises to the cell membrane. It carries out the reaction Ca(2+)(in) = Ca(2+)(out). It catalyses the reaction Mg(2+)(in) = Mg(2+)(out). The enzyme catalyses K(+)(in) = K(+)(out). The catalysed reaction is Na(+)(in) = Na(+)(out). Activated by a myriad of ligands such as acetylcholine. AChR activity is inhibited by the antagonist alpha-conotoxins RgIA and GeXXA, small disulfide-constrained peptides from cone snails. In terms of biological role, component of neuronal acetylcholine receptors (nAChRs) that function as pentameric, ligand-gated cation channels with high calcium permeability among other activities. nAChRs are excitatory neurotrasnmitter receptors formed by a collection of nAChR subunits known to mediate synaptic transmission in the nervous system and the neuromuscular junction. Each nAchR subunit confers differential attributes to channel properties, including activation, deactivation and desensitization kinetics, pH sensitivity, cation permeability, and binding to allosteric modulators. Forms either homopentamers or heteropentamers with CHRNA10. Expressed in the inner ear, in sympathetic neurons and in other non-neuronal cells, such as skin keratinocytes and lymphocytes. nAChR formed by CHRNA9:CHRNA10 mediate central nervous system control of auditory and vestibular sensory processing. The channel is permeable to a range of divalent cations including calcium, the influx of which may activate a potassium current which hyperpolarizes the cell membrane. In the ear, mediates synaptic transmission between efferent olivocochlear fibers and hair cells of the cochlea, this may lead to a reduction in basilar membrane motion, altering the activity of auditory nerve fibers and reducing the range of dynamic hearing. This may protect against acoustic trauma. May also regulate keratinocyte adhesion. This Rattus norvegicus (Rat) protein is Neuronal acetylcholine receptor subunit alpha-9 (Chrna9).